The following is a 122-amino-acid chain: Cytochrome c-556 (122 aa).

Heme-binding residues include Met11, Cys111, Cys114, and His115. Residues Met11, Cys111, Cys114, and His115 each contribute to the heme c site.

Monomer. In terms of processing, binds 1 heme c group covalently per subunit.

Its function is as follows. Low-spin monoheme cytochrome c. The polypeptide is Cytochrome c-556 (Agrobacterium tumefaciens (strain B2A)).